A 349-amino-acid polypeptide reads, in one-letter code: Aspartate-semialdehyde dehydrogenase (349 aa).

NADP(+)-binding positions include 12 to 15 (TGSV) and 39 to 40 (NS). Phosphate is bound at residue Arg-113. Cys-148 acts as the Acyl-thioester intermediate in catalysis. Residue Gln-175 participates in substrate binding. Residue 178 to 179 (SG) coordinates NADP(+). Position 201 (Glu-201) interacts with substrate. Lys-204 is a binding site for phosphate. A substrate-binding site is contributed by Arg-234. The Proton acceptor role is filled by His-241. 326 to 327 (NT) provides a ligand contact to NADP(+).

This sequence belongs to the aspartate-semialdehyde dehydrogenase family. Homodimer.

The enzyme catalyses L-aspartate 4-semialdehyde + phosphate + NADP(+) = 4-phospho-L-aspartate + NADPH + H(+). The protein operates within amino-acid biosynthesis; L-lysine biosynthesis via DAP pathway; (S)-tetrahydrodipicolinate from L-aspartate: step 2/4. Its pathway is amino-acid biosynthesis; L-methionine biosynthesis via de novo pathway; L-homoserine from L-aspartate: step 2/3. It participates in amino-acid biosynthesis; L-threonine biosynthesis; L-threonine from L-aspartate: step 2/5. Functionally, catalyzes the NADPH-dependent formation of L-aspartate-semialdehyde (L-ASA) by the reductive dephosphorylation of L-aspartyl-4-phosphate. In Leptospira interrogans serogroup Icterohaemorrhagiae serovar copenhageni (strain Fiocruz L1-130), this protein is Aspartate-semialdehyde dehydrogenase.